We begin with the raw amino-acid sequence, 819 residues long: Probable beta-glucosidase G (819 aa).

The first 20 residues, 1–20, serve as a signal peptide directing secretion; that stretch reads MTSASQILVWGLLAASGAQA. Asparagine 41, asparagine 59, asparagine 107, asparagine 228, and asparagine 277 each carry an N-linked (GlcNAc...) asparagine glycan. Aspartate 305 is a catalytic residue. Asparagine 337, asparagine 344, asparagine 351, asparagine 403, asparagine 500, asparagine 509, asparagine 554, asparagine 567, asparagine 588, asparagine 627, asparagine 683, and asparagine 719 each carry an N-linked (GlcNAc...) asparagine glycan.

This sequence belongs to the glycosyl hydrolase 3 family.

The protein resides in the secreted. The enzyme catalyses Hydrolysis of terminal, non-reducing beta-D-glucosyl residues with release of beta-D-glucose.. It functions in the pathway glycan metabolism; cellulose degradation. Beta-glucosidases are one of a number of cellulolytic enzymes involved in the degradation of cellulosic biomass. Catalyzes the last step releasing glucose from the inhibitory cellobiose. The polypeptide is Probable beta-glucosidase G (bglG) (Emericella nidulans (strain FGSC A4 / ATCC 38163 / CBS 112.46 / NRRL 194 / M139) (Aspergillus nidulans)).